The chain runs to 1530 residues: Synaptonemal complex protein 2 (1530 aa).

Over residues 439-461 the composition is skewed to basic and acidic residues; the sequence is EKSKSPKEFAKPSKYIKNSDKGN. A disordered region spans residues 439–480; the sequence is EKSKSPKEFAKPSKYIKNSDKGNRNNSQLEKTTPSKRKMSEA. Phosphoserine is present on residues serine 457 and serine 465. A Phosphothreonine modification is found at threonine 471. 4 positions are modified to phosphoserine: serine 494, serine 519, serine 529, and serine 538. The segment at 496–555 is disordered; it reads VLFSNTSIPPRRRRIKPPLQMTSSAEKPSVSQTSENRVDNAASLKSRSSEGRHRRDNIDK. The segment covering 515 to 530 has biased composition (polar residues); it reads QMTSSAEKPSVSQTSE. Residues 542 to 555 are compositionally biased toward basic and acidic residues; that stretch reads RSSEGRHRRDNIDK. Threonine 619 carries the phosphothreonine modification. Disordered stretches follow at residues 653-676, 693-717, and 755-795; these read QKSS…KKEQ, HNQQ…SDWP, and DKNP…SKGK. 2 positions are modified to phosphoserine: serine 660 and serine 664. Polar residues-rich tracts occupy residues 695–713 and 755–764; these read QQQN…NAKQ and DKNPSASKNV. Serine 936 bears the Phosphoserine mark. Threonine 938 carries the phosphothreonine modification. The disordered stretch occupies residues 962–1003; it reads QLIDYSRNKNVKNHKSGKSRSSLEKGQPSSKMTPSKNITKKM. Over residues 970–979 the composition is skewed to basic residues; the sequence is KNVKNHKSGK. Polar residues predominate over residues 988–998; that stretch reads QPSSKMTPSKN. Phosphoserine is present on residues serine 1136, serine 1138, serine 1145, serine 1161, and serine 1177. Threonine 1189 carries the post-translational modification Phosphothreonine. Serine 1204, serine 1234, serine 1253, serine 1295, and serine 1297 each carry phosphoserine. Threonine 1339 is subject to Phosphothreonine.

This sequence belongs to the SYCP2 family. As to quaternary structure, component of the lateral elements of synaptonemal complexes. Heterodimer with SYCP3. Interacts with SMC1A and SMC3. Interacts with TEX11. Post-translationally, phosphorylated.

The protein localises to the nucleus. It localises to the chromosome. Major component of the axial/lateral elements of synaptonemal complexes (SCS) during meiotic prophase. Plays a role in the assembly of synaptonemal complexes. Required for normal meiotic chromosome synapsis during oocyte and spermatocyte development and for normal male and female fertility. Required for insertion of SYCP3 into synaptonemal complexes. May be involved in the organization of chromatin by temporarily binding to DNA scaffold attachment regions. Requires SYCP3, but not SYCP1, in order to be incorporated into the axial/lateral elements. This is Synaptonemal complex protein 2 (SYCP2) from Homo sapiens (Human).